We begin with the raw amino-acid sequence, 972 residues long: Mast/stem cell growth factor receptor Kit (972 aa).

The N-terminal stretch at 1 to 25 is a signal peptide; the sequence is MRGARGAWDFLCVLLLLLRVQTGSS. Topologically, residues 26 to 520 are extracellular; sequence QPSVSPEEAS…QIQPHTLFTP (495 aa). Ig-like C2-type domains follow at residues 27–112, 121–205, 212–308, 317–410, and 413–507; these read PSVS…VFVR, DRSL…LKVR, PVVS…LEVV, PMIN…VYVN, and PEIL…FNFA. A disulfide bond links Cys-58 and Cys-97. N-linked (GlcNAc...) asparagine glycosylation is found at Asn-130 and Asn-145. 3 disulfides stabilise this stretch: Cys-136–Cys-186, Cys-151–Cys-183, and Cys-233–Cys-290. 7 N-linked (GlcNAc...) asparagine glycosylation sites follow: Asn-283, Asn-300, Asn-320, Asn-352, Asn-367, Asn-463, and Asn-486. A disulfide bridge connects residues Cys-428 and Cys-491. Residues 521–541 form a helical membrane-spanning segment; that stretch reads LLIGFVVVAGMMCIIVMILTY. The Cytoplasmic portion of the chain corresponds to 542 to 972; sequence KYLQKPMYEV…SQPLLVRDDV (431 aa). 2 positions are modified to phosphotyrosine: Tyr-543 and Tyr-549. A Mg(2+)-binding site is contributed by Tyr-564. Tyr-564 and Tyr-566 each carry phosphotyrosine; by autocatalysis. Residues 564-566 are important for interaction with phosphotyrosine-binding proteins; that stretch reads YVY. The Protein kinase domain maps to 585 to 933; the sequence is LSFGKTLGAG…ISESTNHIYS (349 aa). ATP contacts are provided by residues 592 to 599, Lys-619, and 667 to 673; these read GAGAFGKV and EYCCYGD. Residues Tyr-699 and Tyr-717 each carry the phosphotyrosine; by autocatalysis modification. Tyr-726 is subject to Phosphotyrosine. Residues Ser-737 and Ser-742 each carry the phosphoserine; by PKC/PRKCA modification. Asp-788 acts as the Proton acceptor in catalysis. Arg-792 provides a ligand contact to ATP. Mg(2+) is bound by residues Asn-793 and Asp-806. Ser-817 carries the phosphoserine modification. Tyr-819 bears the Phosphotyrosine; by autocatalysis mark. Ser-887 bears the Phosphoserine mark. Tyr-896 carries the post-translational modification Phosphotyrosine. Tyr-932 bears the Phosphotyrosine; by autocatalysis mark. Ser-955 is modified (phosphoserine).

The protein belongs to the protein kinase superfamily. Tyr protein kinase family. CSF-1/PDGF receptor subfamily. Monomer in the absence of bound KITLG/SCF. Homodimer in the presence of bound KITLG/SCF, forming a heterotetramer with two KITLG/SCF molecules. Interacts (via phosphorylated tyrosine residues) with the adapter proteins GRB2 and GRB7 (via SH2 domain), and SH2B2/APS. Interacts (via C-terminus) with MPDZ (via the tenth PDZ domain). Interacts (via phosphorylated tyrosine residues) with PIK3R1 and PIK3CD. Interacts (via phosphorylated tyrosine) with CRK (isoform Crk-II), FYN, SHC1 and MATK/CHK (via SH2 domain). Interacts with LYN and FES/FPS. Interacts (via phosphorylated tyrosine residues) with the protein phosphatases PTPN6/SHP-1 (via SH2 domain), PTPN11/SHP-2 (via SH2 domain) and PTPRU. Interacts with PLCG1. Interacts with DOK1 and TEC. Interacts with IL1RAP (independent of stimulation with KITLG/SCF). A mast cell-specific KITLG/SCF-induced interleukin-33 signaling complex contains IL1RL1, IL1RAP, KIT and MYD88. Post-translationally, ubiquitinated by SOCS6. KIT is rapidly ubiquitinated after autophosphorylation induced by KITLG/SCF binding, leading to internalization and degradation. In terms of processing, autophosphorylated on tyrosine residues. KITLG/SCF binding promotes autophosphorylation. Phosphorylated tyrosine residues are important for interaction with specific binding partners.

It localises to the cell membrane. It carries out the reaction L-tyrosyl-[protein] + ATP = O-phospho-L-tyrosyl-[protein] + ADP + H(+). Its activity is regulated as follows. Present in an inactive conformation in the absence of bound ligand. KITLG/SCF binding leads to dimerization and activation by autophosphorylation on tyrosine residues. Activity is down-regulated by PRKCA-mediated phosphorylation on serine residues. Its function is as follows. Tyrosine-protein kinase that acts as a cell-surface receptor for the cytokine KITLG/SCF and plays an essential role in the regulation of cell survival and proliferation, hematopoiesis, stem cell maintenance, gametogenesis, mast cell development, migration and function, and in melanogenesis. In response to KITLG/SCF binding, KIT can activate several signaling pathways. Phosphorylates PIK3R1, PLCG1, SH2B2/APS and CBL. Activates the AKT1 signaling pathway by phosphorylation of PIK3R1, the regulatory subunit of phosphatidylinositol 3-kinase. Activated KIT also transmits signals via GRB2 and activation of RAS, RAF1 and the MAP kinases MAPK1/ERK2 and/or MAPK3/ERK1. Promotes activation of STAT family members STAT1, STAT3, STAT5A and STAT5B. Activation of PLCG1 leads to the production of the cellular signaling molecules diacylglycerol and inositol 1,4,5-trisphosphate. KIT signaling is modulated by protein phosphatases, and by rapid internalization and degradation of the receptor. Activated KIT promotes phosphorylation of the protein phosphatases PTPN6/SHP-1 and PTPRU, and of the transcription factors STAT1, STAT3, STAT5A and STAT5B. Promotes phosphorylation of PIK3R1, CBL, CRK (isoform Crk-II), LYN, MAPK1/ERK2 and/or MAPK3/ERK1, PLCG1, SRC and SHC1. This chain is Mast/stem cell growth factor receptor Kit (KIT), found in Callithrix jacchus (White-tufted-ear marmoset).